A 581-amino-acid chain; its full sequence is Adenine deaminase (581 aa).

The protein belongs to the metallo-dependent hydrolases superfamily. Adenine deaminase family. Mn(2+) serves as cofactor.

It carries out the reaction adenine + H2O + H(+) = hypoxanthine + NH4(+). The chain is Adenine deaminase from Clostridium botulinum (strain Eklund 17B / Type B).